Reading from the N-terminus, the 460-residue chain is CWF19-like protein 2 homolog (460 aa).

Disordered regions lie at residues 38 to 78 (GKTF…EDEK), 103 to 175 (KLES…TGTA), and 193 to 227 (RRHDDESVDDIAEMQKGKKKSDEKDKKRKEKESIK). The segment covering 54 to 68 (GSQQVRNDVMKSSDS) has biased composition (polar residues). Positions 84–106 (KILKAEMKGDTDLVKKLKRKLES) form a coiled coil. 3 stretches are compositionally biased toward basic and acidic residues: residues 113 to 131 (EPPKSKSKEVTMMRRDREG), 139 to 172 (RRSDSDRHGEGSSRMRREYEKSQDLDSMVREEKT), and 205 to 227 (EMQKGKKKSDEKDKKRKEKESIK). The stretch at 210–231 (KKKSDEKDKKRKEKESIKEHKR) forms a coiled coil.

The protein belongs to the CWF19 family.

The polypeptide is CWF19-like protein 2 homolog (Caenorhabditis elegans).